Consider the following 241-residue polypeptide: 1-(5-phosphoribosyl)-5-[(5-phosphoribosylamino)methylideneamino] imidazole-4-carboxamide isomerase (241 aa).

Asp-10 acts as the Proton acceptor in catalysis. Residue Asp-131 is the Proton donor of the active site.

It belongs to the HisA/HisF family.

Its subcellular location is the cytoplasm. The enzyme catalyses 1-(5-phospho-beta-D-ribosyl)-5-[(5-phospho-beta-D-ribosylamino)methylideneamino]imidazole-4-carboxamide = 5-[(5-phospho-1-deoxy-D-ribulos-1-ylimino)methylamino]-1-(5-phospho-beta-D-ribosyl)imidazole-4-carboxamide. It functions in the pathway amino-acid biosynthesis; L-histidine biosynthesis; L-histidine from 5-phospho-alpha-D-ribose 1-diphosphate: step 4/9. This is 1-(5-phosphoribosyl)-5-[(5-phosphoribosylamino)methylideneamino] imidazole-4-carboxamide isomerase from Bifidobacterium adolescentis (strain ATCC 15703 / DSM 20083 / NCTC 11814 / E194a).